The primary structure comprises 67 residues: Small ribosomal subunit protein bS21 (67 aa).

This sequence belongs to the bacterial ribosomal protein bS21 family.

The sequence is that of Small ribosomal subunit protein bS21 from Hydrogenobaculum sp. (strain Y04AAS1).